The primary structure comprises 98 residues: Cell division topological specificity factor (98 aa).

The protein belongs to the MinE family.

In terms of biological role, prevents the cell division inhibition by proteins MinC and MinD at internal division sites while permitting inhibition at polar sites. This ensures cell division at the proper site by restricting the formation of a division septum at the midpoint of the long axis of the cell. In Methylorubrum populi (strain ATCC BAA-705 / NCIMB 13946 / BJ001) (Methylobacterium populi), this protein is Cell division topological specificity factor.